Consider the following 196-residue polypeptide: Corticoliberin (196 aa).

The signal sequence occupies residues 1-24 (MRLPLLVSAGVLLVALLPCPPCRA). A propeptide spanning residues 25 to 153 (LLSRGPVPGA…HQEAPERERR (129 aa)) is cleaved from the precursor. 3 disordered regions span residues 32–61 (PGARQAPQHPQPLDFFQPPPQSEQPQQPQA), 85–105 (APLSPASSLLAGGSGSRPSPE), and 136–158 (GARNALGGHQEAPERERRSEEPP). Low complexity-rich tracts occupy residues 38-47 (PQHPQPLDFF) and 85-104 (APLSPASSLLAGGSGSRPSP). The span at 146–156 (EAPERERRSEE) shows a compositional bias: basic and acidic residues. Isoleucine amide is present on Ile-194.

It belongs to the sauvagine/corticotropin-releasing factor/urotensin I family. In terms of assembly, interacts (via C-terminus) with CRFR1 (via N-terminal extracellular domain). In terms of tissue distribution, produced by the hypothalamus and placenta.

It localises to the secreted. Hormone regulating the release of corticotropin from pituitary gland. Induces NLRP6 in intestinal epithelial cells, hence may influence gut microbiota profile. This is Corticoliberin (CRH) from Homo sapiens (Human).